A 469-amino-acid chain; its full sequence is Glutamate--tRNA ligase (469 aa).

Residues 8–18 (PSPTGFLHVGG) carry the 'HIGH' region motif. Zn(2+) contacts are provided by cysteine 97, cysteine 99, cysteine 124, and aspartate 126. A 'KMSKS' region motif is present at residues 236–240 (KLSKR). Lysine 239 provides a ligand contact to ATP.

Belongs to the class-I aminoacyl-tRNA synthetase family. Glutamate--tRNA ligase type 1 subfamily. Monomer. It depends on Zn(2+) as a cofactor.

The protein localises to the cytoplasm. It catalyses the reaction tRNA(Glu) + L-glutamate + ATP = L-glutamyl-tRNA(Glu) + AMP + diphosphate. Functionally, catalyzes the attachment of glutamate to tRNA(Glu) in a two-step reaction: glutamate is first activated by ATP to form Glu-AMP and then transferred to the acceptor end of tRNA(Glu). This is Glutamate--tRNA ligase from Francisella philomiragia subsp. philomiragia (strain ATCC 25017 / CCUG 19701 / FSC 153 / O#319-036).